A 206-amino-acid polypeptide reads, in one-letter code: Large ribosomal subunit protein uL4 (206 aa).

It belongs to the universal ribosomal protein uL4 family. As to quaternary structure, part of the 50S ribosomal subunit.

Functionally, one of the primary rRNA binding proteins, this protein initially binds near the 5'-end of the 23S rRNA. It is important during the early stages of 50S assembly. It makes multiple contacts with different domains of the 23S rRNA in the assembled 50S subunit and ribosome. In terms of biological role, forms part of the polypeptide exit tunnel. This is Large ribosomal subunit protein uL4 from Paracoccus denitrificans (strain Pd 1222).